We begin with the raw amino-acid sequence, 637 residues long: Mitochondrial Rho GTPase 1 (637 aa).

Residues 1 to 613 (MSDGETLADV…LRRVFYLSDS (613 aa)) are Cytoplasmic-facing. Residues 7–184 (LADVRIVLIG…FYYAQKAVIY (178 aa)) form the Miro 1 domain. Residues 28–35 (SLLEDEWV), 74–78 (ISEMR), and 135–138 (LPSG) each bind GTP. EF-hand domains follow at residues 200-235 (RAKKALIRVFKICDRDNDGYLSDTELNDFQKLCFGI) and 320-355 (EGVQFVSALFEKYDEDKDGCLSPSELQNLFSVCSAP). Ca(2+) is bound by residues Asp-213, Asp-215, Asp-217, Tyr-219, Glu-224, Asp-333, Asp-335, Asp-337, Cys-339, and Glu-344. Positions 436-601 (RKVFQCLVVG…FEQLAMMAVY (166 aa)) constitute a Miro 2 domain. Residues 445–452 (GAKDAGKT), 482–486 (KVKEE), and 549–552 (TKVE) contribute to the GTP site. Residues 614–634 (NLLSKITFGAAIVALAGFLVL) traverse the membrane as a helical; Anchor for type IV membrane protein segment. At 635-637 (KNL) the chain is on the mitochondrial intermembrane side.

The protein belongs to the mitochondrial Rho GTPase family.

Its subcellular location is the mitochondrion outer membrane. Its function is as follows. Mitochondrial GTPase involved in mitochondrial trafficking. Probably involved in control of anterograde transport of mitochondria and their subcellular distribution. This is Mitochondrial Rho GTPase 1 from Caenorhabditis briggsae.